A 493-amino-acid polypeptide reads, in one-letter code: BICD family-like cargo adapter 2 (493 aa).

2 coiled-coil regions span residues 56 to 275 (ELGK…ELHM) and 365 to 431 (MQHV…LLST).

It belongs to the BICDR family.

This is BICD family-like cargo adapter 2 (bicdl2) from Xenopus laevis (African clawed frog).